A 161-amino-acid chain; its full sequence is uncharacterized protein (161 aa).

Residues methionine 1–glycine 16 are compositionally biased toward low complexity. 3 disordered regions span residues methionine 1–leucine 23, glycine 50–alanine 91, and arginine 140–serine 161.

This is an uncharacterized protein from Homo sapiens (Human).